The primary structure comprises 344 residues: Phosphoribosylformylglycinamidine cyclo-ligase (344 aa).

The protein belongs to the AIR synthase family.

Its subcellular location is the cytoplasm. It carries out the reaction 2-formamido-N(1)-(5-O-phospho-beta-D-ribosyl)acetamidine + ATP = 5-amino-1-(5-phospho-beta-D-ribosyl)imidazole + ADP + phosphate + H(+). It functions in the pathway purine metabolism; IMP biosynthesis via de novo pathway; 5-amino-1-(5-phospho-D-ribosyl)imidazole from N(2)-formyl-N(1)-(5-phospho-D-ribosyl)glycinamide: step 2/2. The polypeptide is Phosphoribosylformylglycinamidine cyclo-ligase (Haemophilus influenzae (strain PittGG)).